Reading from the N-terminus, the 150-residue chain is Large ribosomal subunit protein uL13 (150 aa).

Residues 128–150 (GSDHPHSAQEPKILSLNSESVTK) are disordered.

The protein belongs to the universal ribosomal protein uL13 family. As to quaternary structure, part of the 50S ribosomal subunit.

This protein is one of the early assembly proteins of the 50S ribosomal subunit, although it is not seen to bind rRNA by itself. It is important during the early stages of 50S assembly. The protein is Large ribosomal subunit protein uL13 of Prochlorococcus marinus (strain NATL1A).